We begin with the raw amino-acid sequence, 95 residues long: Acylphosphatase (95 aa).

Residues 7-93 form the Acylphosphatase-like domain; it reads TWQLFAHGRV…QLFDRFDWLP (87 aa). Residues R22 and N40 contribute to the active site.

It belongs to the acylphosphatase family.

The catalysed reaction is an acyl phosphate + H2O = a carboxylate + phosphate + H(+). The polypeptide is Acylphosphatase (acyP) (Cupriavidus metallidurans (strain ATCC 43123 / DSM 2839 / NBRC 102507 / CH34) (Ralstonia metallidurans)).